We begin with the raw amino-acid sequence, 550 residues long: Spermatogenesis-associated protein 2 (550 aa).

Residues 83-156 form the PUB domain; that stretch reads TVGTAFATLE…YNVRDHPGGA (74 aa). The short motif at 320 to 337 is the PIM motif element; the sequence is YHLSSLDEVDLYTERGLG. Residues 457-480 form a disordered region; it reads SKPVGSGPSPVGSLVSSGSSSSGG.

The protein belongs to the SPATA2 family.

The protein resides in the cytoplasm. The protein localises to the nucleus. Bridging factor that mediates the recruitment of cyld to the LUBAC complex, thereby regulating TNF-alpha-induced necroptosis. Required to activate the 'Met-1'- (linear) and 'Lys-63'-linked deubiquitinase activities of cyld. The polypeptide is Spermatogenesis-associated protein 2 (Danio rerio (Zebrafish)).